A 494-amino-acid chain; its full sequence is Glutamyl-tRNA reductase (494 aa).

Residues 58–61 (TCNR), S118, 123–125 (EQQ), and Q129 each bind substrate. The Nucleophile role is filled by C59. NADP(+) is bound at residue 205–210 (GAGAMA). A disordered region spans residues 448 to 494 (KGANAGSGQRKKQKPQENRVSTARAVYRSTYQDLTQASTPGGKDDDQ). Positions 476 to 486 (STYQDLTQAST) are enriched in polar residues.

The protein belongs to the glutamyl-tRNA reductase family. In terms of assembly, homodimer.

The enzyme catalyses (S)-4-amino-5-oxopentanoate + tRNA(Glu) + NADP(+) = L-glutamyl-tRNA(Glu) + NADPH + H(+). It participates in porphyrin-containing compound metabolism; protoporphyrin-IX biosynthesis; 5-aminolevulinate from L-glutamyl-tRNA(Glu): step 1/2. In terms of biological role, catalyzes the NADPH-dependent reduction of glutamyl-tRNA(Glu) to glutamate 1-semialdehyde (GSA). The protein is Glutamyl-tRNA reductase of Corynebacterium urealyticum (strain ATCC 43042 / DSM 7109).